A 96-amino-acid chain; its full sequence is Large ribosomal subunit protein bL27 (96 aa).

The propeptide occupies 1 to 11 (MLKTLENLQLF). The disordered stretch occupies residues 13–36 (HKKGGGSTSNGRDSQAKRLGAKAA).

This sequence belongs to the bacterial ribosomal protein bL27 family. In terms of processing, the N-terminus is cleaved by ribosomal processing cysteine protease Prp.

This chain is Large ribosomal subunit protein bL27, found in Streptococcus thermophilus (strain CNRZ 1066).